A 21-amino-acid chain; its full sequence is Misgurin (21 aa).

The disordered stretch occupies residues 1–21 (RQRVEELSKFSKKGAAARRRK). Residues 10–21 (FSKKGAAARRRK) are compositionally biased toward basic residues.

It is found in the secreted. In terms of biological role, strong antimicrobial activity against several Gram-positive and Gram-negative bacteria and fungi. In Misgurnus anguillicaudatus (Oriental weatherloach), this protein is Misgurin.